Reading from the N-terminus, the 222-residue chain is UPF0758 protein Cag_1513 (222 aa).

Residues 100-222 (KIMAAGDVFE…WYSFRERGLL (123 aa)) form the MPN domain. Zn(2+) is bound by residues His-171, His-173, and Asp-184. The short motif at 171-184 (HNHPSGDVNPSNAD) is the JAMM motif element.

The protein belongs to the UPF0758 family.

The polypeptide is UPF0758 protein Cag_1513 (Chlorobium chlorochromatii (strain CaD3)).